The primary structure comprises 283 residues: DegV domain-containing protein BH3627 (283 aa).

Residues 4 to 281 enclose the DegV domain; the sequence is IAIVTDSTAY…EGSIGLSWYI (278 aa). Residues Thr62 and Ser95 each contribute to the hexadecanoate site.

May bind long-chain fatty acids, such as palmitate, and may play a role in lipid transport or fatty acid metabolism. In Halalkalibacterium halodurans (strain ATCC BAA-125 / DSM 18197 / FERM 7344 / JCM 9153 / C-125) (Bacillus halodurans), this protein is DegV domain-containing protein BH3627.